We begin with the raw amino-acid sequence, 452 residues long: Tubulin beta-2 chain (452 aa).

GTP-binding residues include Gln-11, Glu-72, Ser-141, Gly-145, Thr-146, Gly-147, Asn-207, and Asn-229. Residue Glu-72 participates in Mg(2+) binding. The tract at residues 414–452 (AESNMNDPVAEYQQYQDATADDEEEYDDEAADDHHQYES) is disordered. Positions 432 to 444 (TADDEEEYDDEAA) are enriched in acidic residues.

The protein belongs to the tubulin family. Dimer of alpha and beta chains. A typical microtubule is a hollow water-filled tube with an outer diameter of 25 nm and an inner diameter of 15 nM. Alpha-beta heterodimers associate head-to-tail to form protofilaments running lengthwise along the microtubule wall with the beta-tubulin subunit facing the microtubule plus end conferring a structural polarity. Microtubules usually have 13 protofilaments but different protofilament numbers can be found in some organisms and specialized cells. The cofactor is Mg(2+).

The protein resides in the cytoplasm. Its subcellular location is the cytoskeleton. In terms of biological role, tubulin is the major constituent of microtubules, a cylinder consisting of laterally associated linear protofilaments composed of alpha- and beta-tubulin heterodimers. Microtubules grow by the addition of GTP-tubulin dimers to the microtubule end, where a stabilizing cap forms. Below the cap, tubulin dimers are in GDP-bound state, owing to GTPase activity of alpha-tubulin. This is Tubulin beta-2 chain (TUBB2) from Solanum tuberosum (Potato).